The following is a 396-amino-acid chain: Acetate kinase (396 aa).

N7 contacts Mg(2+). Position 14 (K14) interacts with ATP. R86 serves as a coordination point for substrate. The active-site Proton donor/acceptor is the D143. ATP is bound by residues 203 to 207 (HLGNG), 277 to 279 (DMR), and 325 to 329 (GIGEH). E380 contacts Mg(2+).

It belongs to the acetokinase family. As to quaternary structure, homodimer. The cofactor is Mg(2+). Requires Mn(2+) as cofactor.

The protein resides in the cytoplasm. It carries out the reaction acetate + ATP = acetyl phosphate + ADP. It functions in the pathway metabolic intermediate biosynthesis; acetyl-CoA biosynthesis; acetyl-CoA from acetate: step 1/2. Catalyzes the formation of acetyl phosphate from acetate and ATP. Can also catalyze the reverse reaction. This Sulfurovum sp. (strain NBC37-1) protein is Acetate kinase.